The primary structure comprises 123 residues: WAP four-disulfide core domain protein 5 (123 aa).

A signal peptide spans 1–24; the sequence is MRFWSLFLLVVLLAVGGQLPAASG. 2 WAP domains span residues 27–74 and 75–121; these read KGER…VPRI and LVKR…RDPA. 8 disulfides stabilise this stretch: Cys34–Cys62, Cys41–Cys66, Cys49–Cys61, Cys55–Cys70, Cys81–Cys109, Cys88–Cys113, Cys96–Cys108, and Cys102–Cys117.

It is found in the secreted. Putative acid-stable proteinase inhibitor. The polypeptide is WAP four-disulfide core domain protein 5 (WFDC5) (Lemur catta (Ring-tailed lemur)).